The sequence spans 237 residues: Pyridoxine 5'-phosphate synthase (237 aa).

Residues N7 and R18 each coordinate 3-amino-2-oxopropyl phosphate. H43 (proton acceptor) is an active-site residue. 1-deoxy-D-xylulose 5-phosphate contacts are provided by R45 and H50. Residue E70 is the Proton acceptor of the active site. T100 serves as a coordination point for 1-deoxy-D-xylulose 5-phosphate. The active-site Proton donor is the H190. 3-amino-2-oxopropyl phosphate-binding positions include D191 and 213–214 (GH).

The protein belongs to the PNP synthase family. In terms of assembly, homooctamer; tetramer of dimers.

The protein resides in the cytoplasm. The catalysed reaction is 3-amino-2-oxopropyl phosphate + 1-deoxy-D-xylulose 5-phosphate = pyridoxine 5'-phosphate + phosphate + 2 H2O + H(+). Its pathway is cofactor biosynthesis; pyridoxine 5'-phosphate biosynthesis; pyridoxine 5'-phosphate from D-erythrose 4-phosphate: step 5/5. Its function is as follows. Catalyzes the complicated ring closure reaction between the two acyclic compounds 1-deoxy-D-xylulose-5-phosphate (DXP) and 3-amino-2-oxopropyl phosphate (1-amino-acetone-3-phosphate or AAP) to form pyridoxine 5'-phosphate (PNP) and inorganic phosphate. The sequence is that of Pyridoxine 5'-phosphate synthase from Christiangramia forsetii (strain DSM 17595 / CGMCC 1.15422 / KT0803) (Gramella forsetii).